We begin with the raw amino-acid sequence, 421 residues long: Mitochondrial distribution and morphology protein 10 (421 aa).

This sequence belongs to the MDM10 family. In terms of assembly, component of the ER-mitochondria encounter structure (ERMES) or MDM complex, composed of MMM1, MDM10, MDM12 and MDM34. Associates with the mitochondrial outer membrane sorting assembly machinery SAM(core) complex.

It is found in the mitochondrion outer membrane. Functionally, component of the ERMES/MDM complex, which serves as a molecular tether to connect the endoplasmic reticulum and mitochondria. Components of this complex are involved in the control of mitochondrial shape and protein biogenesis and may function in phospholipid exchange. MDM10 is involved in the late assembly steps of the general translocase of the mitochondrial outer membrane (TOM complex). Functions in the TOM40-specific route of the assembly of outer membrane beta-barrel proteins, including the association of TOM40 with the receptor TOM22 and small TOM proteins. Can associate with the SAM(core) complex as well as the MDM12-MMM1 complex, both involved in late steps of the major beta-barrel assembly pathway, that is responsible for biogenesis of all outer membrane beta-barrel proteins. May act as a switch that shuttles between both complexes and channels precursor proteins into the TOM40-specific pathway. Plays a role in mitochondrial morphology and in the inheritance of mitochondria. The protein is Mitochondrial distribution and morphology protein 10 of Vanderwaltozyma polyspora (strain ATCC 22028 / DSM 70294 / BCRC 21397 / CBS 2163 / NBRC 10782 / NRRL Y-8283 / UCD 57-17) (Kluyveromyces polysporus).